A 510-amino-acid chain; its full sequence is MSLNPNGYKLSERTGKLTAYDLMPTTVTAGPETREFLLKVIDVLLDFVKATNDRNEKVLDFHHPEDMKRLLDLDVPDRALPLQQLIEDCATTLKYQVKTGHPHFFNQLSNGLDLISMAGEWLTATANTNMFTYEIAPVFILMENVVLTKMREIIGWSGGDSILAPGGSISNLYAFLAARHKMFPNYKEHGSVGLPGTLVMFTSDQCHYSIKSCAAVCGLGTDHCIVVPSDEHGKMITSELERLILERKAKGDIPFFVNATAGTTVLGAFDDINTIADICQKYNCWMHIDAAWGGGLLMSRKHRHPRFTGVERADSVTWNPHKLMGALLQCSTIHFKEDGLLISCNQMSAEYLFMTDKQYDISYDTGDKVIQCGRHNDIFKLWLQWRAKGTEGFEQQQDRLMELVQYQLKRIREQSDRFHLILEPECVNVSFWYVPKRLRGVPHDAKKEVELGKICPIIKGRMMQKGTLMVGYQPDDRRPNFFRSIISSAAVNEADVDFMLDEIHRLGDDL.

107–109 is a substrate binding site; it reads QLS. At lysine 322 the chain carries N6-(pyridoxal phosphate)lysine. Arginine 483 lines the substrate pocket.

It belongs to the group II decarboxylase family. As to quaternary structure, homodimer. Pyridoxal 5'-phosphate serves as cofactor. In terms of tissue distribution, expressed in the head (at protein level).

The catalysed reaction is L-glutamate + H(+) = 4-aminobutanoate + CO2. Functionally, catalyzes the production of GABA. The sequence is that of Glutamate decarboxylase (Gad1) from Drosophila melanogaster (Fruit fly).